The following is a 40-amino-acid chain: Photosystem II reaction center protein J (40 aa).

A helical transmembrane segment spans residues 8-28 (IPLWLIGTVTGTLVIGLIGIF).

The protein belongs to the PsbJ family. PSII is composed of 1 copy each of membrane proteins PsbA, PsbB, PsbC, PsbD, PsbE, PsbF, PsbH, PsbI, PsbJ, PsbK, PsbL, PsbM, PsbT, PsbX, PsbY, PsbZ, Psb30/Ycf12, at least 3 peripheral proteins of the oxygen-evolving complex and a large number of cofactors. It forms dimeric complexes.

It localises to the plastid. The protein resides in the chloroplast thylakoid membrane. One of the components of the core complex of photosystem II (PSII). PSII is a light-driven water:plastoquinone oxidoreductase that uses light energy to abstract electrons from H(2)O, generating O(2) and a proton gradient subsequently used for ATP formation. It consists of a core antenna complex that captures photons, and an electron transfer chain that converts photonic excitation into a charge separation. The sequence is that of Photosystem II reaction center protein J from Cycas taitungensis (Prince sago).